We begin with the raw amino-acid sequence, 424 residues long: Histidine--tRNA ligase (424 aa).

It belongs to the class-II aminoacyl-tRNA synthetase family. Homodimer.

The protein localises to the cytoplasm. It catalyses the reaction tRNA(His) + L-histidine + ATP = L-histidyl-tRNA(His) + AMP + diphosphate + H(+). In Salmonella arizonae (strain ATCC BAA-731 / CDC346-86 / RSK2980), this protein is Histidine--tRNA ligase.